The sequence spans 224 residues: Pre-hexon-linking protein VIII (224 aa).

A Phosphothreonine; by host modification is found at threonine 64. The propeptide occupies arginine 112–glycine 154.

The protein belongs to the adenoviridae hexon-linking protein family. Interacts with the peripentonal hexons as well as the hexons in the facets. Part of a complex composed of the core-capsid bridging protein, the endosome lysis protein VI and the hexon-linking protein VIII; these interactions bridge the virus core to the capsid. In terms of processing, cleaved by the viral protease during virion maturation. May cause the middle segment to be shed from the capsid.

The protein localises to the virion. The protein resides in the host nucleus. Structural component of the virion that acts as a cement protein on the capsid interior and which glue the peripentonal hexons and group-of-nine hexons together. The sequence is that of Pre-hexon-linking protein VIII from Canis lupus familiaris (Dog).